The chain runs to 124 residues: Putative ankyrin repeat protein RF_1087 (124 aa).

3 ANK repeats span residues 17 to 46 (NDQKLLHLAIRAGYKNIVEYLLKKGANPNI), 50 to 79 (NGETTLHFAAMNGCVRTIECLIKSGAIIDS), and 83 to 112 (FERTPLELAINSGNTDAVKLFLQYEATIGN).

The sequence is that of Putative ankyrin repeat protein RF_1087 from Rickettsia felis (strain ATCC VR-1525 / URRWXCal2) (Rickettsia azadi).